A 541-amino-acid chain; its full sequence is NADH-ubiquinone oxidoreductase chain 5 (541 aa).

16 helical membrane passes run 17-37 (LLIF…LFAF), 48-70 (TIIH…YYMM), 74-94 (FVNR…LLIM), 98-118 (GLSL…LIMF), 130-150 (ITIL…GLMF), 157-177 (YMFL…SSFT), 191-213 (AMAA…AGIY), 226-246 (GCFL…LAAF), 263-283 (LGVM…FHLF), 285-305 (HALF…SLGV), 322-342 (SYII…SGFF), 353-373 (SLCM…TSTY), 404-424 (LFVL…MFSG), 429-449 (IILG…GVIL), 455-475 (SFSL…FITG), and 518-538 (FLTS…TLFM).

Belongs to the complex I subunit 5 family.

The protein resides in the mitochondrion inner membrane. It carries out the reaction a ubiquinone + NADH + 5 H(+)(in) = a ubiquinol + NAD(+) + 4 H(+)(out). Core subunit of the mitochondrial membrane respiratory chain NADH dehydrogenase (Complex I) that is believed to belong to the minimal assembly required for catalysis. Complex I functions in the transfer of electrons from NADH to the respiratory chain. The immediate electron acceptor for the enzyme is believed to be ubiquinone. This Artemia franciscana (Brine shrimp) protein is NADH-ubiquinone oxidoreductase chain 5 (ND5).